The primary structure comprises 563 residues: MLKAQSAAAGSLHQTLSQYSASIATDGSSSVTGSFKTDDSVNFITFNQDASCIAVGLNNGYKIFNCKPKFGKCYQIRKEESVGIIEMLYCTSLLAIVALGEEPGSSPRKLKIVNTKRQTTICDLIFPSTILQVKLTKSRLIVLLEEQIYIYDITTMKLLHTIETSPNSIGLCALSTTPDNDGNNYLAYPSPPKTITHDSLLASGINTNGGTNSVVNNISSVSNSPNRVGDVIMFNLNTLQPMSVIEAHKSALAAITLSSDGSLLATASDKGTIVRVFSVATGVKLFQFRRGTYSTKIYSLSFSSDNNYVVATSSSETVHIFRLGESEALENKHKKKKASTPKPTQPETIEEEDATLLQERPSQESTQDDDEFADDGDDSDEAVEGDDNDDESLEVISNKQRKLSQGSSNSFASFNSGTDDSSQAAKNEPLIDQNRLSVARLIRRSSQTLGRKAAQRMGDFLPSRFSSILEPTRHFASLKINAIGKDVKSIAVMNNELQEDLVPQAFLMRKDSDSYLSKEMLSLNLLHIYVVTSEGFFYTYGLDPERGGDCILLHQYSLIDESN.

WD repeat units lie at residues 36 to 74 (KTDD…GKCY), 247 to 287 (AHKS…KLFQ), and 292 to 331 (TYST…ALEN). A L/FRRG motif motif is present at residues 288 to 292 (FRRGT). A disordered region spans residues 329–430 (LENKHKKKKA…SSQAAKNEPL (102 aa)). Residues 366–393 (TQDDDEFADDGDDSDEAVEGDDNDDESL) show a composition bias toward acidic residues. Low complexity predominate over residues 404 to 417 (SQGSSNSFASFNSG).

Belongs to the WD repeat PROPPIN family. In terms of assembly, component of the PI(3,5)P2 regulatory complex.

It is found in the preautophagosomal structure membrane. It localises to the vacuole membrane. The protein resides in the endosome membrane. The PI(3,5)P2 regulatory complex regulates both the synthesis and turnover of phosphatidylinositol 3,5-bisphosphate (PtdIns(3,5)P2). Necessary for proper vacuole morphology. Plays an important role in osmotically-induced vacuole fragmentation. Required for cytoplasm to vacuole transport (Cvt) vesicle formation, pexophagy and starvation-induced autophagy. Involved in correct ATG9 trafficking to the pre-autophagosomal structure. Might also be involved in premeiotic DNA replication. This Scheffersomyces stipitis (strain ATCC 58785 / CBS 6054 / NBRC 10063 / NRRL Y-11545) (Yeast) protein is Autophagy-related protein 18 (ATG18).